Consider the following 265-residue polypeptide: 3-methyl-2-oxobutanoate hydroxymethyltransferase (265 aa).

Mg(2+)-binding residues include Asp-45 and Asp-84. 3-methyl-2-oxobutanoate contacts are provided by residues Asp-45–Ser-46, Asp-84, and Lys-112. Glu-114 is a binding site for Mg(2+). Glu-181 (proton acceptor) is an active-site residue.

This sequence belongs to the PanB family. In terms of assembly, homodecamer; pentamer of dimers. Mg(2+) serves as cofactor.

Its subcellular location is the cytoplasm. It catalyses the reaction 3-methyl-2-oxobutanoate + (6R)-5,10-methylene-5,6,7,8-tetrahydrofolate + H2O = 2-dehydropantoate + (6S)-5,6,7,8-tetrahydrofolate. It participates in cofactor biosynthesis; (R)-pantothenate biosynthesis; (R)-pantoate from 3-methyl-2-oxobutanoate: step 1/2. In terms of biological role, catalyzes the reversible reaction in which hydroxymethyl group from 5,10-methylenetetrahydrofolate is transferred onto alpha-ketoisovalerate to form ketopantoate. In Yersinia pseudotuberculosis serotype IB (strain PB1/+), this protein is 3-methyl-2-oxobutanoate hydroxymethyltransferase.